Here is a 158-residue protein sequence, read N- to C-terminus: Mitotic-spindle organizing protein 2A (158 aa).

Position 34 is a phosphoserine (Ser34). The disordered stretch occupies residues 84–158 (RLASEPQDPA…PGKSPTQGST (75 aa)). Positions 112 to 122 (SAALGGVLALA) are enriched in low complexity. The span at 128–140 (EGSSQRMPRQPSA) shows a compositional bias: polar residues. Ser152 is modified (phosphoserine).

This sequence belongs to the MOZART2 family. As to quaternary structure, associates with the gamma-tubulin ring complex (gTuRC) consisting of TUBGCP2, TUBGCP3, TUBGCP4, TUBGCP5 and TUBGCP6 and gamma-tubulin TUBG1 or TUBG2; within the complex, interacts with TUBGCP2; the interaction plays a role in gTuRC activation.

It is found in the cytoplasm. It localises to the cytoskeleton. Its subcellular location is the microtubule organizing center. The protein resides in the centrosome. The protein localises to the spindle. Required for the recruitment and the assembly of the gamma-tubulin ring complex (gTuRC) at the centrosome. The gTuRC regulates the minus-end nucleation of alpha-beta tubulin heterodimers that grow into microtubule protafilaments, a critical step in centrosome duplication and spindle formation. The protein is Mitotic-spindle organizing protein 2A (MZT2A) of Homo sapiens (Human).